The primary structure comprises 441 residues: Ribosomal protein uS12 methylthiotransferase RimO (441 aa).

One can recognise an MTTase N-terminal domain in the interval 6-116; the sequence is QKVGIVSLGC…VVAAVHEAAP (111 aa). [4Fe-4S] cluster-binding residues include Cys15, Cys51, Cys80, Cys147, Cys151, and Cys154. The 238-residue stretch at 133-370 folds into the Radical SAM core domain; sequence LTPRHYAYLK…MAAQQEISER (238 aa). The TRAM domain occupies 373–439; the sequence is AQKVGTVIEA…EYDLWGSLAG (67 aa).

This sequence belongs to the methylthiotransferase family. RimO subfamily. The cofactor is [4Fe-4S] cluster.

The protein resides in the cytoplasm. The enzyme catalyses L-aspartate(89)-[ribosomal protein uS12]-hydrogen + (sulfur carrier)-SH + AH2 + 2 S-adenosyl-L-methionine = 3-methylsulfanyl-L-aspartate(89)-[ribosomal protein uS12]-hydrogen + (sulfur carrier)-H + 5'-deoxyadenosine + L-methionine + A + S-adenosyl-L-homocysteine + 2 H(+). In terms of biological role, catalyzes the methylthiolation of an aspartic acid residue of ribosomal protein uS12. This Rhodospirillum rubrum (strain ATCC 11170 / ATH 1.1.1 / DSM 467 / LMG 4362 / NCIMB 8255 / S1) protein is Ribosomal protein uS12 methylthiotransferase RimO.